The following is a 428-amino-acid chain: Acylglycerol kinase, mitochondrial (428 aa).

The interval 18 to 34 is hydrophobic; sequence STVGFCLLAYGSHWLYG. The DAGKc domain maps to 61-202; that stretch reads SAIKKATVFL…LDVLQIKGEQ (142 aa).

This sequence belongs to the AGK family. Component of the TIM22 complex. Mg(2+) serves as cofactor.

It localises to the mitochondrion inner membrane. The protein resides in the mitochondrion intermembrane space. It carries out the reaction a monoacylglycerol + ATP = a monoacyl-sn-glycero-3-phosphate + ADP + H(+). It catalyses the reaction a 1,2-diacyl-sn-glycerol + ATP = a 1,2-diacyl-sn-glycero-3-phosphate + ADP + H(+). The enzyme catalyses an N-acylsphing-4-enine + ATP = an N-acylsphing-4-enine 1-phosphate + ADP + H(+). The catalysed reaction is 1-(9Z-octadecenoyl)-sn-glycerol + ATP = 1-(9Z-octadecenoyl)-sn-glycero-3-phosphate + ADP + H(+). It carries out the reaction 1,2-di-(9Z-octadecenoyl)-sn-glycerol + ATP = 1,2-di-(9Z-octadecenoyl)-sn-glycero-3-phosphate + ADP + H(+). It catalyses the reaction a 1-acyl-sn-glycerol + ATP = a 1-acyl-sn-glycero-3-phosphate + ADP + H(+). The enzyme catalyses 1-hexadecanoyl-sn-glycerol + ATP = 1-hexadecanoyl-sn-glycero-3-phosphate + ADP + H(+). The catalysed reaction is a 2-acylglycerol + ATP = a 2-acyl-sn-glycerol 3-phosphate + ADP + H(+). It carries out the reaction 2-(5Z,8Z,11Z,14Z-eicosatetraenoyl)-glycerol + ATP = 2-(5Z,8Z,11Z,14Z-eicosatetraenoyl)-sn-glycero-3-phosphate + ADP + H(+). It catalyses the reaction 1-(5Z,8Z,11Z,14Z-eicosatetraenoyl)-sn-glycerol + ATP = 1-(5Z,8Z,11Z,14Z-eicosatetraenoyl)-sn-glycero-3-phosphate + ADP + H(+). The enzyme catalyses N-(hexanoyl)sphing-4-enine + ATP = N-hexanoylsphing-4-enine 1-phosphate + ADP + H(+). The protein operates within lipid metabolism; glycerolipid metabolism. Lipid kinase that can phosphorylate both monoacylglycerol and diacylglycerol to form lysophosphatidic acid (LPA) and phosphatidic acid (PA), respectively. Phosphorylates ceramide but not sphingosine. Phosphorylates 1,2-dioleoylglycerol more rapidly than 2,3-dioleoylglycerol. Independently of its lipid kinase activity, acts as a component of the TIM22 complex. The TIM22 complex mediates the import and insertion of multi-pass transmembrane proteins into the mitochondrial inner membrane by forming a twin-pore translocase that uses the membrane potential as the external driving force. This chain is Acylglycerol kinase, mitochondrial, found in Xenopus laevis (African clawed frog).